A 530-amino-acid chain; its full sequence is Arginine--tRNA ligase (530 aa).

The 'HIGH' region signature appears at 113 to 123 (ANPTGPLHIGH).

The protein belongs to the class-I aminoacyl-tRNA synthetase family. As to quaternary structure, monomer.

It is found in the cytoplasm. It catalyses the reaction tRNA(Arg) + L-arginine + ATP = L-arginyl-tRNA(Arg) + AMP + diphosphate. In Campylobacter jejuni subsp. doylei (strain ATCC BAA-1458 / RM4099 / 269.97), this protein is Arginine--tRNA ligase.